We begin with the raw amino-acid sequence, 191 residues long: Thymidylate kinase (191 aa).

An ATP-binding site is contributed by 7-14; it reads GIDTAGKS.

Belongs to the thymidylate kinase family.

The enzyme catalyses dTMP + ATP = dTDP + ADP. Functionally, phosphorylation of dTMP to form dTDP in both de novo and salvage pathways of dTTP synthesis. This Sulfurimonas denitrificans (strain ATCC 33889 / DSM 1251) (Thiomicrospira denitrificans (strain ATCC 33889 / DSM 1251)) protein is Thymidylate kinase.